Reading from the N-terminus, the 345-residue chain is 4-hydroxy-3-methylbut-2-en-1-yl diphosphate synthase (flavodoxin) (345 aa).

[4Fe-4S] cluster-binding residues include C271, C274, C306, and E313.

This sequence belongs to the IspG family. [4Fe-4S] cluster serves as cofactor.

It catalyses the reaction (2E)-4-hydroxy-3-methylbut-2-enyl diphosphate + oxidized [flavodoxin] + H2O + 2 H(+) = 2-C-methyl-D-erythritol 2,4-cyclic diphosphate + reduced [flavodoxin]. Its pathway is isoprenoid biosynthesis; isopentenyl diphosphate biosynthesis via DXP pathway; isopentenyl diphosphate from 1-deoxy-D-xylulose 5-phosphate: step 5/6. In terms of biological role, converts 2C-methyl-D-erythritol 2,4-cyclodiphosphate (ME-2,4cPP) into 1-hydroxy-2-methyl-2-(E)-butenyl 4-diphosphate. The sequence is that of 4-hydroxy-3-methylbut-2-en-1-yl diphosphate synthase (flavodoxin) from Haemophilus influenzae (strain PittEE).